A 533-amino-acid chain; its full sequence is RNA end formation protein 2 (533 aa).

Disordered stretches follow at residues 187-254, 260-279, and 321-344; these read SNST…SSMK, LFNKNEAKSTESLPTSSKKK, and SSSTSGSSTTTVATPASSEEPLKK. Over residues 206–222 the composition is skewed to basic and acidic residues; the sequence is KIKDSEKEKEKEKDKSK. Residues 242–252 are compositionally biased toward low complexity; it reads SSPSPTASTSS. Residues 321 to 338 show a composition bias toward low complexity; it reads SSSTSGSSTTTVATPASS.

In terms of assembly, interacts with FIR1. Component of the cleavage and polyadenylation factor (CPF) complex, which is composed of PTI1, SYC1, SSU72, GLC7, MPE1, REF2, PFS2, PTA1, YSH1/BRR5, SWD2, CFT2/YDH1, YTH1, CFT1/YHH1, FIP1 and PAP1. Component of the APT complex, which is a subcomplex of CPF, and is composed of PTI1, SYC1, SSU72, GLC7, REF2, PTA1 and SWD2.

It localises to the nucleus. In terms of biological role, RNA-binding component of the cleavage and polyadenylation factor (CPF) complex, which plays a key role in polyadenylation-dependent pre-mRNA 3'-end formation and cooperates with cleavage factors including the CFIA complex and NAB4/CFIB. Negative regulator of poly(A) synthesis. Component of the APT complex, which may be involved in polyadenylation-independent transcript 3'-end formation. REF2 is required for 3'-end formation of snoRNAs. The polypeptide is RNA end formation protein 2 (REF2) (Saccharomyces cerevisiae (strain ATCC 204508 / S288c) (Baker's yeast)).